We begin with the raw amino-acid sequence, 145 residues long: uncharacterized protein (145 aa).

Transmembrane regions (helical) follow at residues 3–23 (VGIILGILSAMGFLVFLGIGG), 83–103 (YVIDVGYSILFLVTLTLYLVP), and 105–125 (LSLLVWVTFFGATVFMIMLWI).

It localises to the cell membrane. This is an uncharacterized protein from Methanocaldococcus jannaschii (strain ATCC 43067 / DSM 2661 / JAL-1 / JCM 10045 / NBRC 100440) (Methanococcus jannaschii).